The chain runs to 831 residues: Glucan 1,3-beta-glucosidase D (831 aa).

Basic and acidic residues predominate over residues 1–21; that stretch reads MPSQSRSRDRYGRDSDRDRSR. Disordered regions lie at residues 1 to 246 and 261 to 288; these read MPSQ…RGQS and APDM…SDGS. Topologically, residues 1–300 are cytoplasmic; it reads MPSQSRSRDR…LTPFWKRKKW (300 aa). The segment covering 32–41 has biased composition (acidic residues); that stretch reads EDDDDDDDFD. Composition is skewed to basic and acidic residues over residues 42–70, 78–94, and 151–177; these read DNPR…HDDY, EPRR…ERAR, and DAAR…HKST. The segment covering 178 to 195 has biased composition (low complexity); sequence DSSNSSAGLLNANALAKL. 2 stretches are compositionally biased toward basic and acidic residues: residues 197-216 and 275-286; these read AQHE…EAKA and PPRERRWEKDSD. The chain crosses the membrane as a helical; Signal-anchor for type II membrane protein span at residues 301 to 321; the sequence is WWIGAIVLVIVVIIIVVAVVV. The Extracellular portion of the chain corresponds to 322–831; the sequence is SNNKKSDSDS…PSFGNLPEYY (510 aa). The tract at residues 325–360 is disordered; the sequence is KKSDSDSDSDSNSGSSDSWGGDKSSLNGLDHDSIPK. The span at 334 to 350 shows a compositional bias: low complexity; that stretch reads DSNSGSSDSWGGDKSSL. N-linked (GlcNAc...) asparagine glycosylation is found at N379, N396, and N547. The Proton donor role is filled by E598. Residues N611, N637, N670, and N690 are each glycosylated (N-linked (GlcNAc...) asparagine). E703 acts as the Nucleophile in catalysis.

The protein belongs to the glycosyl hydrolase 5 (cellulase A) family.

The protein localises to the cell membrane. It catalyses the reaction Successive hydrolysis of beta-D-glucose units from the non-reducing ends of (1-&gt;3)-beta-D-glucans, releasing alpha-glucose.. Glucosidase involved in the degradation of cellulosic biomass. Active on lichenan. The sequence is that of Glucan 1,3-beta-glucosidase D (exgD) from Emericella nidulans (strain FGSC A4 / ATCC 38163 / CBS 112.46 / NRRL 194 / M139) (Aspergillus nidulans).